Consider the following 437-residue polypeptide: Adenylosuccinate synthetase (437 aa).

Residues 12-18 and 40-42 each bind GTP; these read GDEGKGK and GHT. The Proton acceptor role is filled by aspartate 13. Residues aspartate 13 and glycine 40 each coordinate Mg(2+). Residues 13–16, 38–41, threonine 128, arginine 142, glutamine 223, threonine 238, and arginine 302 each bind IMP; these read DEGK and NAGH. Histidine 41 serves as the catalytic Proton donor. 298–304 contacts substrate; it reads TTTGRRR. GTP-binding positions include arginine 304, 330–332, and 412–414; these read KLD and SLG.

This sequence belongs to the adenylosuccinate synthetase family. As to quaternary structure, homodimer. Requires Mg(2+) as cofactor.

The protein localises to the cytoplasm. It carries out the reaction IMP + L-aspartate + GTP = N(6)-(1,2-dicarboxyethyl)-AMP + GDP + phosphate + 2 H(+). The protein operates within purine metabolism; AMP biosynthesis via de novo pathway; AMP from IMP: step 1/2. Functionally, plays an important role in the de novo pathway of purine nucleotide biosynthesis. Catalyzes the first committed step in the biosynthesis of AMP from IMP. The sequence is that of Adenylosuccinate synthetase from Synechococcus sp. (strain RCC307).